The primary structure comprises 591 residues: L-fucose isomerase (591 aa).

Residues Glu337 and Asp361 each act as proton acceptor in the active site. Residues Glu337, Asp361, and His528 each coordinate Mn(2+).

Belongs to the L-fucose isomerase family. In terms of assembly, homohexamer. Mn(2+) is required as a cofactor.

It localises to the cytoplasm. The catalysed reaction is L-fucose = L-fuculose. Its pathway is carbohydrate degradation; L-fucose degradation; L-lactaldehyde and glycerone phosphate from L-fucose: step 1/3. Converts the aldose L-fucose into the corresponding ketose L-fuculose. This chain is L-fucose isomerase, found in Escherichia coli (strain UTI89 / UPEC).